A 567-amino-acid chain; its full sequence is Interleukin-1 receptor-like 1 (567 aa).

Positions 1-26 are cleaved as a signal peptide; that stretch reads MIDRQRMGLWALAILTLPMYLTVTEG. Ig-like C2-type domains are found at residues 27-109 and 120-203; these read SKSS…LNVT and PDYL…VTAT. Over 27–332 the chain is Extracellular; sequence SKSSWGLENE…LRRKQPIDHR (306 aa). C42 and C93 are oxidised to a cystine. Residues N60, N101, N107, N146, N176, and N194 are each glycosylated (N-linked (GlcNAc...) asparagine). Disulfide bonds link C117–C157 and C139–C187. A flexible linker region spans residues 204–216; the sequence is RSFTVEEKGFSMF. In terms of domain architecture, Ig-like C2-type 3 spans 217–324; it reads PVITNPPYNH…GMIRHTIRLR (108 aa). 3 N-linked (GlcNAc...) asparagine glycosylation sites follow: N225, N259, and N278. 2 disulfides stabilise this stretch: C240-C308 and C243-C287. Residue K326 forms a Glycyl lysine isopeptide (Lys-Gly) (interchain with G-Cter in ubiquitin) linkage. The chain crosses the membrane as a helical span at residues 333-355; the sequence is SIYYIVAGCSLLLMFINVLVIVL. At 356–567 the chain is on the cytoplasmic side; it reads KVFWIEVALF…GKACLDLKHF (212 aa). Residues 380–540 enclose the TIR domain; that stretch reads KLYDAYIIYP…KFWKHVRYQM (161 aa). S442 bears the Phosphoserine; by GSK3-beta mark. Residue E466 is part of the active site.

The protein belongs to the interleukin-1 receptor family. As to quaternary structure, interacts with MYD88, IRAK1, IRAK4, and TRAF6. Bound to its ligand IL33, interacts with IL1RAP to form the minimal interleukin-33 signaling complex with a 1:1:1 stoichiometry. Interacts with KIT (bound to KITLG/SCF). A mast cell-specific KITLG/SCF-induced interleukin-33 signaling complex contains IL1RL1, IL1RAP, KIT and MYD88. Interacts with TMED1. Phosphorylated by GSK3B at Ser-442; leading to proteasomal degradation. Post-translationally, ubiquitinated at Lys-326 in a FBXL19-mediated manner; leading to proteasomal degradation. Ubiquitination by TRAF6 via 'Lys-27'-linked polyubiquitination and deubiquitination by USP38 serves as a critical regulatory mechanism for fine-tuning IL1RL1-mediated inflammatory response. In terms of tissue distribution, predominantly expressed in hematopoietic tissues, and in macrophage, erythroid, epithelial and fibroblast cell lines. Isoform A is expressed in brain astrocytes and microglia. Isoform B is expressed in brain endothelial cells.

It localises to the cell membrane. Its subcellular location is the secreted. It carries out the reaction NAD(+) + H2O = ADP-D-ribose + nicotinamide + H(+). Receptor for interleukin-33 (IL-33) which plays crucial roles in innate and adaptive immunity, contributing to tissue homeostasis and responses to environmental stresses together with coreceptor IL1RAP. Its stimulation recruits MYD88, IRAK1, IRAK4, and TRAF6, followed by phosphorylation of MAPK3/ERK1 and/or MAPK1/ERK2, MAPK14, and MAPK8. Possibly involved in helper T-cell function. Upon tissue injury, induces UCP2-dependent mitochondrial rewiring that attenuates the generation of reactive oxygen species and preserves the integrity of Krebs cycle required for persistent production of itaconate and subsequent GATA3-dependent differentiation of inflammation-resolving alternatively activated macrophages. Functionally, inhibits IL-33 signaling. In Mus musculus (Mouse), this protein is Interleukin-1 receptor-like 1 (Il1rl1).